A 709-amino-acid polypeptide reads, in one-letter code: Coiled-coil domain-containing protein 13 (709 aa).

Coiled-coil stretches lie at residues 70-97, 139-178, and 206-288; these read IFEKRVLEDEIQHLRSELRETVDENGRL, ELSKKNRGLMAESESAKVRIKQLTNRIQELEHQLQMASAK, and EVKA…QRQN. At Ser258 the chain carries Phosphoserine. The disordered stretch occupies residues 281–312; the sequence is KQLGQRQNKPAGSSSSEVPLSSDSRKMTAQEK. A compositionally biased stretch (low complexity) spans 293 to 302; it reads SSSSEVPLSS. Positions 323–457 form a coiled coil; sequence DKQESWEKLA…ELEIGQLSVQ (135 aa). 3 disordered regions span residues 462–499, 512–542, and 600–641; these read KGGGEGASPADARFPEDQTPITNSPASAGDHVGRLGSS, SALTRPSLPSPHGTSPRFSDSPEQKGWQAQA, and KMRL…SSTQ. Ser469 and Ser532 each carry phosphoserine. Residues 539 to 604 are a coiled coil; the sequence is QAQAAEMKAL…EQHLEKMRLE (66 aa).

As to quaternary structure, interacts with PCM1, CEP290 and PCNT.

It localises to the cytoplasm. Its subcellular location is the cytoskeleton. The protein resides in the microtubule organizing center. The protein localises to the centrosome. It is found in the centriolar satellite. It localises to the cilium basal body. Its function is as follows. Required for primary cilia formation and promotes the localization of the ciliopathy protein BBS4 to both centriolar satellites and cilia. The sequence is that of Coiled-coil domain-containing protein 13 from Mus musculus (Mouse).